Reading from the N-terminus, the 229-residue chain is DNA repair protein RecO (229 aa).

This sequence belongs to the RecO family.

In terms of biological role, involved in DNA repair and RecF pathway recombination. In Legionella pneumophila subsp. pneumophila (strain Philadelphia 1 / ATCC 33152 / DSM 7513), this protein is DNA repair protein RecO.